The following is a 197-amino-acid chain: Dehydrin DHN1 (197 aa).

The span at 1–14 (MSQYQNQYGAQTGM) shows a compositional bias: polar residues. Disordered regions lie at residues 1–86 (MSQY…GTNP) and 133–197 (GTEQ…CTGH). Tandem repeats lie at residues 16–21 (DEYGNP) and 26–31 (DQYGNP). A 2 X approximate repeats region spans residues 16 to 31 (DEYGNPVNQVDQYGNP). The segment covering 74–83 (THTGGVGGYG) has biased composition (gly residues). The 2-1 repeat unit spans residues 126 to 133 (KIKEKIPG). A 2 X approximate repeats region spans residues 126–190 (KIKEKIPGTE…MDKIKEKLPG (65 aa)). Over residues 144–160 (AGYGSTGYGASGGGIGN) the composition is skewed to gly residues. Positions 165–188 (YVREEHRVDHGEKKGIMDKIKEKL) are enriched in basic and acidic residues. A 2-2 repeat occupies 183-190 (KIKEKLPG).

Belongs to the plant dehydrin family. As to expression, shoots, roots, and cotyledon from dehydrating seedlings.

The chain is Dehydrin DHN1 (DHN1) from Pisum sativum (Garden pea).